The sequence spans 53 residues: Sec-independent protein translocase protein TatA (53 aa).

The helical transmembrane segment at 1–21 (MGMSFSHLLIVLLIIFVLFGA) threads the bilayer.

Belongs to the TatA/E family. As to quaternary structure, the Tat system comprises two distinct complexes: a TatABC complex, containing multiple copies of TatA, TatB and TatC subunits, and a separate TatA complex, containing only TatA subunits. Substrates initially bind to the TatABC complex, which probably triggers association of the separate TatA complex to form the active translocon.

The protein localises to the cell inner membrane. In terms of biological role, part of the twin-arginine translocation (Tat) system that transports large folded proteins containing a characteristic twin-arginine motif in their signal peptide across membranes. TatA could form the protein-conducting channel of the Tat system. The sequence is that of Sec-independent protein translocase protein TatA from Rickettsia africae (strain ESF-5).